The primary structure comprises 185 residues: Protein GrpE (185 aa).

The interval 1 to 22 (MTASQEPVDQAPESNEPAPAVP) is disordered.

It belongs to the GrpE family. In terms of assembly, homodimer.

Its subcellular location is the cytoplasm. Functionally, participates actively in the response to hyperosmotic and heat shock by preventing the aggregation of stress-denatured proteins, in association with DnaK and GrpE. It is the nucleotide exchange factor for DnaK and may function as a thermosensor. Unfolded proteins bind initially to DnaJ; upon interaction with the DnaJ-bound protein, DnaK hydrolyzes its bound ATP, resulting in the formation of a stable complex. GrpE releases ADP from DnaK; ATP binding to DnaK triggers the release of the substrate protein, thus completing the reaction cycle. Several rounds of ATP-dependent interactions between DnaJ, DnaK and GrpE are required for fully efficient folding. This Bordetella petrii (strain ATCC BAA-461 / DSM 12804 / CCUG 43448) protein is Protein GrpE.